The chain runs to 362 residues: Molybdopterin synthase catalytic subunit (362 aa).

Residues 101-102 (HR), K117, and 124-126 (KKE) contribute to the substrate site.

The protein belongs to the MoaE family. MOCS2B subfamily. Heterotetramer; composed of 2 small (Mocs2A) and 2 large (Mocs2B) subunits.

Its subcellular location is the cytoplasm. It catalyses the reaction 2 [molybdopterin-synthase sulfur-carrier protein]-C-terminal-Gly-aminoethanethioate + cyclic pyranopterin phosphate + H2O = molybdopterin + 2 [molybdopterin-synthase sulfur-carrier protein]-C-terminal Gly-Gly + 2 H(+). It functions in the pathway cofactor biosynthesis; molybdopterin biosynthesis. In terms of biological role, catalytic subunit of the molybdopterin synthase complex, a complex that catalyzes the conversion of precursor Z into molybdopterin. Acts by mediating the incorporation of 2 sulfur atoms from thiocarboxylated Mocs2A into precursor Z to generate a dithiolene group. The polypeptide is Molybdopterin synthase catalytic subunit (Drosophila grimshawi (Hawaiian fruit fly)).